The primary structure comprises 388 residues: MVGTPLFSNAKKILLLGSGELGKEVIIEAQRFGVECIAVDSYENAPAMQVAHRFHVIDMKDAGALREVIEREKPDLIVPEIEAINTDTLKEMETEGYHVVPTANATKLTMDREGIRRLAFEKLGLRTAKYEFAENLEELKEAVQRIGIPCIIKPIMSSSGKGQSTIKSEGDIEKSWDYAKSAARGIGTKVIVEEFIKFDYEITLLTARTAEGTRFCEPIGHIQIDGDYHESWQPHPMCAPTKAKAQEMAKKITDELGGYGIFGVELFVLDDEVIFSEVSPRPHDTGMVTMVTQKMSEFEIHARAILGLPVNVDILFPGASHVIKSEILKWAPEYEIHEASKVKDTKIRLFGKPIAKVGRRMGVALAVSDNVTKARENAEKAAHLVNIK.

N(1)-(5-phospho-beta-D-ribosyl)glycinamide-binding positions include 20 to 21 (EL) and Glu80. ATP is bound by residues Arg112, Lys153, 158–163 (SSGKGQ), 193–196 (EEFI), and Glu201. One can recognise an ATP-grasp domain in the interval 117–306 (RLAFEKLGLR…EFEIHARAIL (190 aa)). Mg(2+)-binding residues include Glu265 and Glu277. N(1)-(5-phospho-beta-D-ribosyl)glycinamide contacts are provided by residues Asp284, Lys352, and 359 to 360 (RR).

This sequence belongs to the PurK/PurT family. Homodimer.

It catalyses the reaction N(1)-(5-phospho-beta-D-ribosyl)glycinamide + formate + ATP = N(2)-formyl-N(1)-(5-phospho-beta-D-ribosyl)glycinamide + ADP + phosphate + H(+). Its pathway is purine metabolism; IMP biosynthesis via de novo pathway; N(2)-formyl-N(1)-(5-phospho-D-ribosyl)glycinamide from N(1)-(5-phospho-D-ribosyl)glycinamide (formate route): step 1/1. Its function is as follows. Involved in the de novo purine biosynthesis. Catalyzes the transfer of formate to 5-phospho-ribosyl-glycinamide (GAR), producing 5-phospho-ribosyl-N-formylglycinamide (FGAR). Formate is provided by PurU via hydrolysis of 10-formyl-tetrahydrofolate. In Methanococcus maripaludis (strain C5 / ATCC BAA-1333), this protein is Formate-dependent phosphoribosylglycinamide formyltransferase.